The following is a 493-amino-acid chain: Ribonuclease Y (493 aa).

A helical transmembrane segment spans residues 19–39 (IFAILFLIIVILNLGLLVFLA). Residues 172-241 (SASFTVIESD…LTIRNILIND (70 aa)) enclose the KH domain. The 93-residue stretch at 300–392 (VLSHCLETGF…TQIGDKLSAG (93 aa)) folds into the HD domain.

This sequence belongs to the RNase Y family.

The protein localises to the cell membrane. Functionally, endoribonuclease that initiates mRNA decay. The sequence is that of Ribonuclease Y from Mycoplasma pneumoniae (strain ATCC 29342 / M129 / Subtype 1) (Mycoplasmoides pneumoniae).